The sequence spans 182 residues: Crossover junction endodeoxyribonuclease RuvC (182 aa).

Catalysis depends on residues Asp-7, Glu-69, and Asp-141. Mg(2+) contacts are provided by Asp-7, Glu-69, and Asp-141.

It belongs to the RuvC family. As to quaternary structure, homodimer which binds Holliday junction (HJ) DNA. The HJ becomes 2-fold symmetrical on binding to RuvC with unstacked arms; it has a different conformation from HJ DNA in complex with RuvA. In the full resolvosome a probable DNA-RuvA(4)-RuvB(12)-RuvC(2) complex forms which resolves the HJ. Mg(2+) is required as a cofactor.

The protein localises to the cytoplasm. The catalysed reaction is Endonucleolytic cleavage at a junction such as a reciprocal single-stranded crossover between two homologous DNA duplexes (Holliday junction).. Its function is as follows. The RuvA-RuvB-RuvC complex processes Holliday junction (HJ) DNA during genetic recombination and DNA repair. Endonuclease that resolves HJ intermediates. Cleaves cruciform DNA by making single-stranded nicks across the HJ at symmetrical positions within the homologous arms, yielding a 5'-phosphate and a 3'-hydroxyl group; requires a central core of homology in the junction. The consensus cleavage sequence is 5'-(A/T)TT(C/G)-3'. Cleavage occurs on the 3'-side of the TT dinucleotide at the point of strand exchange. HJ branch migration catalyzed by RuvA-RuvB allows RuvC to scan DNA until it finds its consensus sequence, where it cleaves and resolves the cruciform DNA. The chain is Crossover junction endodeoxyribonuclease RuvC from Paracidovorax citrulli (strain AAC00-1) (Acidovorax citrulli).